Reading from the N-terminus, the 175-residue chain is VQ motif-containing protein 25 (175 aa).

The VQ signature appears at 50 to 59 (FRELVQSLTG).

It localises to the nucleus. In terms of biological role, may function as negative regulator of plant defense. In Arabidopsis thaliana (Mouse-ear cress), this protein is VQ motif-containing protein 25.